The chain runs to 100 residues: UPF0248 protein APE_0939 (100 aa).

It belongs to the UPF0248 family.

The chain is UPF0248 protein APE_0939 from Aeropyrum pernix (strain ATCC 700893 / DSM 11879 / JCM 9820 / NBRC 100138 / K1).